The primary structure comprises 355 residues: 3-dehydroquinate synthase (355 aa).

Residues 71–76 (EGEASK), 105–109 (GVVGD), 129–130 (TS), lysine 142, and lysine 151 each bind NAD(+). Zn(2+) contacts are provided by glutamate 184, histidine 246, and histidine 263.

The protein belongs to the sugar phosphate cyclases superfamily. Dehydroquinate synthase family. Requires Co(2+) as cofactor. Zn(2+) is required as a cofactor. The cofactor is NAD(+).

Its subcellular location is the cytoplasm. The enzyme catalyses 7-phospho-2-dehydro-3-deoxy-D-arabino-heptonate = 3-dehydroquinate + phosphate. Its pathway is metabolic intermediate biosynthesis; chorismate biosynthesis; chorismate from D-erythrose 4-phosphate and phosphoenolpyruvate: step 2/7. Catalyzes the conversion of 3-deoxy-D-arabino-heptulosonate 7-phosphate (DAHP) to dehydroquinate (DHQ). In Streptococcus gordonii (strain Challis / ATCC 35105 / BCRC 15272 / CH1 / DL1 / V288), this protein is 3-dehydroquinate synthase.